Reading from the N-terminus, the 121-residue chain is Large ribosomal subunit protein uL24 (121 aa).

The protein belongs to the universal ribosomal protein uL24 family. As to quaternary structure, part of the 50S ribosomal subunit.

In terms of biological role, one of two assembly initiator proteins, it binds directly to the 5'-end of the 23S rRNA, where it nucleates assembly of the 50S subunit. Located at the polypeptide exit tunnel on the outside of the subunit. This chain is Large ribosomal subunit protein uL24, found in Thermococcus kodakarensis (strain ATCC BAA-918 / JCM 12380 / KOD1) (Pyrococcus kodakaraensis (strain KOD1)).